The primary structure comprises 235 residues: Large ribosomal subunit protein uL1 (235 aa).

It belongs to the universal ribosomal protein uL1 family. Part of the 50S ribosomal subunit.

Binds directly to 23S rRNA. The L1 stalk is quite mobile in the ribosome, and is involved in E site tRNA release. Functionally, protein L1 is also a translational repressor protein, it controls the translation of the L11 operon by binding to its mRNA. The polypeptide is Large ribosomal subunit protein uL1 (Mycobacterium marinum (strain ATCC BAA-535 / M)).